The following is a 332-amino-acid chain: Glycerol-3-phosphate dehydrogenase [NAD(P)+] (332 aa).

Residues Ser11, Phe12, Lys32, and Lys106 each coordinate NADPH. Residues Lys106, Gly137, and Ser139 each coordinate sn-glycerol 3-phosphate. Residue Ala141 participates in NADPH binding. Sn-glycerol 3-phosphate contacts are provided by Lys192, Asp245, Ser255, Arg256, and Asn257. Lys192 acts as the Proton acceptor in catalysis. Arg256 lines the NADPH pocket. Val280 and Glu282 together coordinate NADPH.

This sequence belongs to the NAD-dependent glycerol-3-phosphate dehydrogenase family.

Its subcellular location is the cytoplasm. It carries out the reaction sn-glycerol 3-phosphate + NAD(+) = dihydroxyacetone phosphate + NADH + H(+). It catalyses the reaction sn-glycerol 3-phosphate + NADP(+) = dihydroxyacetone phosphate + NADPH + H(+). It functions in the pathway membrane lipid metabolism; glycerophospholipid metabolism. Functionally, catalyzes the reduction of the glycolytic intermediate dihydroxyacetone phosphate (DHAP) to sn-glycerol 3-phosphate (G3P), the key precursor for phospholipid synthesis. This Staphylococcus epidermidis (strain ATCC 35984 / DSM 28319 / BCRC 17069 / CCUG 31568 / BM 3577 / RP62A) protein is Glycerol-3-phosphate dehydrogenase [NAD(P)+].